We begin with the raw amino-acid sequence, 544 residues long: CTP synthase (544 aa).

Residues 1-267 (MSKFIFVTGG…GDLLVSRLHL (267 aa)) are amidoligase domain. Ser13 provides a ligand contact to CTP. Residue Ser13 coordinates UTP. Position 14 to 19 (14 to 19 (SVGKGI)) interacts with ATP. Tyr54 contacts L-glutamine. Asp71 contacts ATP. Mg(2+) contacts are provided by Asp71 and Glu141. CTP contacts are provided by residues 148–150 (DIE), 188–193 (KTKPTQ), and Lys224. Residues 188-193 (KTKPTQ) and Lys224 each bind UTP. The Glutamine amidotransferase type-1 domain occupies 299 to 534 (YVELKDAYYS…INAAKKVIRD (236 aa)). Residue Gly354 participates in L-glutamine binding. Catalysis depends on Cys381, which acts as the Nucleophile; for glutamine hydrolysis. L-glutamine contacts are provided by residues 382-385 (LGMQ), Glu405, and Arg462. Residues His507 and Glu509 contribute to the active site.

This sequence belongs to the CTP synthase family. In terms of assembly, homotetramer.

The catalysed reaction is UTP + L-glutamine + ATP + H2O = CTP + L-glutamate + ADP + phosphate + 2 H(+). It carries out the reaction L-glutamine + H2O = L-glutamate + NH4(+). It catalyses the reaction UTP + NH4(+) + ATP = CTP + ADP + phosphate + 2 H(+). The protein operates within pyrimidine metabolism; CTP biosynthesis via de novo pathway; CTP from UDP: step 2/2. With respect to regulation, allosterically activated by GTP, when glutamine is the substrate; GTP has no effect on the reaction when ammonia is the substrate. The allosteric effector GTP functions by stabilizing the protein conformation that binds the tetrahedral intermediate(s) formed during glutamine hydrolysis. Inhibited by the product CTP, via allosteric rather than competitive inhibition. In terms of biological role, catalyzes the ATP-dependent amination of UTP to CTP with either L-glutamine or ammonia as the source of nitrogen. Regulates intracellular CTP levels through interactions with the four ribonucleotide triphosphates. In Dehalococcoides mccartyi (strain ATCC BAA-2100 / JCM 16839 / KCTC 5957 / BAV1), this protein is CTP synthase.